The sequence spans 187 residues: Signal peptidase complex catalytic subunit SEC11 (187 aa).

The Cytoplasmic portion of the chain corresponds to 1 to 14 (MLSSLSPYMANPRN). A helical; Signal-anchor for type II membrane protein membrane pass occupies residues 15-33 (TLSQVLNFGLVLSSAFMVW). At 34-187 (KTLSVITNST…MGLMVMLQRE (154 aa)) the chain is on the lumenal side. Residue asparagine 41 is glycosylated (N-linked (GlcNAc...) asparagine). Catalysis depends on charge relay system residues serine 53 and histidine 92. N-linked (GlcNAc...) asparagine glycosylation is present at asparagine 125. The active-site Charge relay system is aspartate 129. A C-terminal short (CTS) helix region spans residues 173-184 (VLLGFMGLMVML).

It belongs to the peptidase S26B family. As to quaternary structure, component of the signal peptidase complex (SPC) composed of a catalytic subunit SEC11 and three accessory subunits SPC1, SPC2 and SPC3. The complex induces a local thinning of the ER membrane which is used to measure the length of the signal peptide (SP) h-region of protein substrates. This ensures the selectivity of the complex towards h-regions shorter than 18-20 amino acids. SPC associates with the translocon complex.

The protein localises to the endoplasmic reticulum membrane. The catalysed reaction is Cleavage of hydrophobic, N-terminal signal or leader sequences from secreted and periplasmic proteins.. Catalytic component of the signal peptidase complex (SPC) which catalyzes the cleavage of N-terminal signal sequences from nascent proteins as they are translocated into the lumen of the endoplasmic reticulum. Specifically cleaves N-terminal signal peptides that contain a hydrophobic alpha-helix (h-region) shorter than 18-20 amino acids. The protein is Signal peptidase complex catalytic subunit SEC11 (SEC11) of Ajellomyces capsulatus (strain H88) (Darling's disease fungus).